Consider the following 142-residue polypeptide: Hemoglobin subunit beta (142 aa).

A Globin domain is found at 3 to 142 (KLSEDQEHYI…VAEALSSNYH (140 aa)). Heme b contacts are provided by histidine 60 and histidine 89.

This sequence belongs to the globin family. As to quaternary structure, heterotetramer of two alpha chains and two beta chains. As to expression, red blood cells.

Involved in oxygen transport from gills to the various peripheral tissues. The polypeptide is Hemoglobin subunit beta (HBB) (Hemitrygon akajei (Red stingray)).